We begin with the raw amino-acid sequence, 237 residues long: Uridylate kinase (237 aa).

10-13 (KLSG) provides a ligand contact to ATP. Residue Gly-51 coordinates UMP. ATP contacts are provided by Gly-52 and Arg-56. UMP is bound by residues Asp-71 and 133 to 140 (TGNPCFTT). ATP is bound by residues Thr-160, Tyr-166, and Asp-169.

Belongs to the UMP kinase family. In terms of assembly, homohexamer.

The protein resides in the cytoplasm. The catalysed reaction is UMP + ATP = UDP + ADP. It functions in the pathway pyrimidine metabolism; CTP biosynthesis via de novo pathway; UDP from UMP (UMPK route): step 1/1. Inhibited by UTP. Catalyzes the reversible phosphorylation of UMP to UDP. This chain is Uridylate kinase, found in Vesicomyosocius okutanii subsp. Calyptogena okutanii (strain HA).